Consider the following 757-residue polypeptide: 5-methyltetrahydropteroyltriglutamate--homocysteine methyltransferase (757 aa).

Residues lysine 18 and asparagine 116 each coordinate 5-methyltetrahydropteroyltri-L-glutamate. 437–439 (IGS) lines the L-homocysteine pocket. L-methionine is bound by residues 437 to 439 (IGS) and glutamate 490. 5-methyltetrahydropteroyltri-L-glutamate contacts are provided by residues 521-522 (RC) and tryptophan 567. Residue aspartate 605 participates in L-homocysteine binding. Residue aspartate 605 coordinates L-methionine. Histidine 647, cysteine 649, histidine 658, aspartate 662, and glutamate 671 together coordinate Zn(2+). The Proton donor role is filled by histidine 701. A Zn(2+)-binding site is contributed by cysteine 733.

Belongs to the vitamin-B12 independent methionine synthase family. The cofactor is Zn(2+). Expressed in pollen (at protein level).

It catalyses the reaction 5-methyltetrahydropteroyltri-L-glutamate + L-homocysteine = tetrahydropteroyltri-L-glutamate + L-methionine. It participates in amino-acid biosynthesis; L-methionine biosynthesis via de novo pathway; L-methionine from L-homocysteine (MetE route): step 1/1. In terms of biological role, catalyzes the transfer of a methyl group from 5-methyltetrahydrofolate to homocysteine resulting in methionine formation. This chain is 5-methyltetrahydropteroyltriglutamate--homocysteine methyltransferase, found in Kali turgidum (Prickly saltwort).